The sequence spans 262 residues: MSNKPKRILVSNDDGYFSEGLQALVEAVSPLGEVWVVAPDREQSAASHAISLHRPLRIKEVRERWFAVDGTPADCAYLAINHLLKDDRPVLMVSGINHGANLAEDIMYSGTVAAAMEGALLGVPAIAFSLVARRNFDFAPGARFARSLVSSALSRPLPPRMLLNVNIPGGVEPEGYVVTRQGRHSYGFEVVENEDPRGRKYYWIGGSDYQHEDIPGSDCNAVFRDKRVSVTPLHFELTDHGRLPDLSGWQVDGFNRHEPDGA.

A divalent metal cation contacts are provided by aspartate 13, aspartate 14, serine 44, and asparagine 97.

This sequence belongs to the SurE nucleotidase family. A divalent metal cation is required as a cofactor.

The protein resides in the cytoplasm. The enzyme catalyses a ribonucleoside 5'-phosphate + H2O = a ribonucleoside + phosphate. Its function is as follows. Nucleotidase that shows phosphatase activity on nucleoside 5'-monophosphates. The chain is 5'-nucleotidase SurE from Myxococcus xanthus (strain DK1622).